Here is a 405-residue protein sequence, read N- to C-terminus: Pentatricopeptide repeat-containing protein At3g14580, mitochondrial (405 aa).

The transit peptide at M1–R37 directs the protein to the mitochondrion. The interval N13–R44 is disordered. 8 PPR repeats span residues T94–E124, S130–P165, S166–I200, D201–P235, N236–P270, D271–P305, N306–P340, and S341–P375.

Belongs to the PPR family. P subfamily.

The protein localises to the mitochondrion. This is Pentatricopeptide repeat-containing protein At3g14580, mitochondrial from Arabidopsis thaliana (Mouse-ear cress).